The sequence spans 173 residues: Small ribosomal subunit protein uS5 (173 aa).

The 64-residue stretch at 16–79 (LSELLVSVRR…NAAKKNMIRV (64 aa)) folds into the S5 DRBM domain.

This sequence belongs to the universal ribosomal protein uS5 family. Part of the 30S ribosomal subunit. Contacts proteins S4 and S8.

In terms of biological role, with S4 and S12 plays an important role in translational accuracy. Functionally, located at the back of the 30S subunit body where it stabilizes the conformation of the head with respect to the body. This Anaplasma phagocytophilum (strain HZ) protein is Small ribosomal subunit protein uS5.